Here is a 777-residue protein sequence, read N- to C-terminus: Ribosome-releasing factor 2, mitochondrial (777 aa).

In terms of domain architecture, tr-type G spans 68-353 (AKIRNIGIMA…AVTMYLPSPE (286 aa)). GTP-binding positions include 77–84 (AHIDAGKT), 141–145 (DTPGH), and 195–198 (NKMD).

It belongs to the TRAFAC class translation factor GTPase superfamily. Classic translation factor GTPase family. EF-G/EF-2 subfamily.

The protein resides in the mitochondrion. The enzyme catalyses GTP + H2O = GDP + phosphate + H(+). Mitochondrial GTPase that mediates the disassembly of ribosomes from messenger RNA at the termination of mitochondrial protein biosynthesis. Acts in collaboration with MRRF. GTP hydrolysis follows the ribosome disassembly and probably occurs on the ribosome large subunit. Not involved in the GTP-dependent ribosomal translocation step during translation elongation. This Pongo abelii (Sumatran orangutan) protein is Ribosome-releasing factor 2, mitochondrial.